Consider the following 205-residue polypeptide: uncharacterized protein (205 aa).

The protein belongs to the peptidase C56 family.

This is an uncharacterized protein from Methanocaldococcus jannaschii (strain ATCC 43067 / DSM 2661 / JAL-1 / JCM 10045 / NBRC 100440) (Methanococcus jannaschii).